A 948-amino-acid polypeptide reads, in one-letter code: Receptor-like protein 45 (948 aa).

The first 26 residues, 1-26, serve as a signal peptide directing secretion; it reads MSSSKLMDFGLTWIIMMMILLQGCRS. Residues 27 to 897 lie on the Extracellular side of the membrane; it reads CIESERQGLL…EDDDESGLLD (871 aa). N-linked (GlcNAc...) asparagine glycans are attached at residues Asn99 and Asn113. LRR repeat units lie at residues 106-129 and 135-162; these read FEEL…RKGG and LRNL…AVSL. One copy of the LRR 3; degenerate repeat lies at 163 to 183; that stretch reads KTLILHDNLFKGGFPVQELIN. Asn183 carries N-linked (GlcNAc...) asparagine glycosylation. LRR repeat units follow at residues 184–208, 210–233, 234–257, 258–284, 286–306, 307–332, 334–357, 358–381, 382–404, 405–429, 430–453, 454–477, 479–502, 503–526, 527–549, 550–573, 575–595, 596–618, 619–640, 642–665, 666–689, 758–782, 783–805, 807–831, and 833–855; these read LTSL…ELTN, RNLR…GICR, LEQL…CFSR, FSKL…DFKS, EYLS…LITE, LTEL…VSGG, QSQL…LWYQ, QELR…LLEN, NTEL…PRTM, RRLQ…GLIL, ASLR…MARM, ENIE…LFTG, YSLS…SSDE, TSLI…LLNL, RMLS…WLGN, FFLE…LFNI, YLWL…LRSS, SDYG…DTLW, YGLR…LFRS, PSIS…LCGL, SNVR…VTNL, LNQM…LGDL, KRVR…SFSN, RSIE…TLLQ, and LVVF…QFNT. Asn328 is a glycosylation site (N-linked (GlcNAc...) asparagine). 2 N-linked (GlcNAc...) asparagine glycosylation sites follow: Asn381 and Asn392. 2 N-linked (GlcNAc...) asparagine glycosylation sites follow: Asn436 and Asn465. N-linked (GlcNAc...) asparagine glycosylation occurs at Asn608. 3 N-linked (GlcNAc...) asparagine glycosylation sites follow: Asn653, Asn679, and Asn688. N-linked (GlcNAc...) asparagine glycosylation occurs at Asn789. N-linked (GlcNAc...) asparagine glycans are attached at residues Asn837 and Asn842. A helical membrane pass occupies residues 898 to 918; that stretch reads IVVLWWSLGTTYVTVMMGFLV. Topologically, residues 919–948 are cytoplasmic; it reads FLCFDSPWRRAWFCLVDTFIDRVKDVLGVI.

The protein belongs to the RLP family.

It is found in the cell membrane. In Arabidopsis thaliana (Mouse-ear cress), this protein is Receptor-like protein 45.